Consider the following 427-residue polypeptide: Trigger factor (427 aa).

The PPIase FKBP-type domain occupies 163 to 248 (GDTVVIDFVG…IHEVKTKEVP (86 aa)).

Belongs to the FKBP-type PPIase family. Tig subfamily.

Its subcellular location is the cytoplasm. It catalyses the reaction [protein]-peptidylproline (omega=180) = [protein]-peptidylproline (omega=0). In terms of biological role, involved in protein export. Acts as a chaperone by maintaining the newly synthesized protein in an open conformation. Functions as a peptidyl-prolyl cis-trans isomerase. This Streptococcus pyogenes serotype M18 (strain MGAS8232) protein is Trigger factor.